We begin with the raw amino-acid sequence, 342 residues long: Cell division protein ZipA (342 aa).

At 1 to 6 (MEDLQL) the chain is on the periplasmic side. The chain crosses the membrane as a helical span at residues 7–27 (VLFILGAIAIVAVLVHGFWSI). Residues 28-342 (RRQQPKSLKD…DYLHRIRANA (315 aa)) are Cytoplasmic-facing. Residues 33-57 (KSLKDSPMGNFYKQQADKESPPKRV) form a disordered region. A compositionally biased stretch (basic and acidic residues) spans 47–57 (QADKESPPKRV).

The protein belongs to the ZipA family. In terms of assembly, interacts with FtsZ via their C-terminal domains.

Its subcellular location is the cell inner membrane. Its function is as follows. Essential cell division protein that stabilizes the FtsZ protofilaments by cross-linking them and that serves as a cytoplasmic membrane anchor for the Z ring. Also required for the recruitment to the septal ring of downstream cell division proteins. This chain is Cell division protein ZipA, found in Shewanella putrefaciens (strain CN-32 / ATCC BAA-453).